Here is a 133-residue protein sequence, read N- to C-terminus: Small ribosomal subunit protein bS6 (133 aa).

The segment at 93-133 (KTAVTEPSPMMKEEPRRERRDDSAPRQERAEKKTETTEDNA) is disordered. A compositionally biased stretch (basic and acidic residues) spans 103–133 (MKEEPRRERRDDSAPRQERAEKKTETTEDNA).

The protein belongs to the bacterial ribosomal protein bS6 family.

Binds together with bS18 to 16S ribosomal RNA. The protein is Small ribosomal subunit protein bS6 of Alteromonas mediterranea (strain DSM 17117 / CIP 110805 / LMG 28347 / Deep ecotype).